Consider the following 277-residue polypeptide: Uracil phosphoribosyltransferase homolog (277 aa).

Positions 1 to 69 are disordered; the sequence is MEAMPCHNQR…AAAPSPAAED (69 aa). Residues 37–69 show a composition bias toward low complexity; it reads AEPSEGSSSGSPSPDSSSGSNGAAAAPSPAAED. Residues Arg101, Arg110, and 144 to 147 each bind GTP; that span reads EKGN. Arg154 contacts 5-phospho-alpha-D-ribose 1-diphosphate. Residues Arg171 and Arg200 each coordinate GTP. 206–214 is a binding site for 5-phospho-alpha-D-ribose 1-diphosphate; it reads YPILSTGNT. 267–269 lines the uracil pocket; the sequence is THF.

It belongs to the UPRTase family.

The protein resides in the cytoplasm. It is found in the nucleus. This is Uracil phosphoribosyltransferase homolog (UPRT) from Gallus gallus (Chicken).